Consider the following 443-residue polypeptide: Thymidine phosphorylase (443 aa).

Belongs to the thymidine/pyrimidine-nucleoside phosphorylase family. In terms of assembly, homodimer.

It carries out the reaction thymidine + phosphate = 2-deoxy-alpha-D-ribose 1-phosphate + thymine. It participates in pyrimidine metabolism; dTMP biosynthesis via salvage pathway; dTMP from thymine: step 1/2. The enzymes which catalyze the reversible phosphorolysis of pyrimidine nucleosides are involved in the degradation of these compounds and in their utilization as carbon and energy sources, or in the rescue of pyrimidine bases for nucleotide synthesis. The polypeptide is Thymidine phosphorylase (Shewanella baltica (strain OS155 / ATCC BAA-1091)).